The chain runs to 147 residues: MATKIRLKRLGKIRTPHYRVVVMDSRAKRDGRAIEEIGQYHPKADPSVIVIDSERVQYWLGVGAQPTEAVVALLKRTGDWQKFTGDTSPSGVKPQPERPNKDDLFNAALAEADEAPREAITKKSEGAAADEASESAAGDNSGEKAEA.

The interval 81–147 (QKFTGDTSPS…GDNSGEKAEA (67 aa)) is disordered. 2 stretches are compositionally biased toward basic and acidic residues: residues 95 to 104 (QPERPNKDDL) and 114 to 125 (EAPREAITKKSE). A compositionally biased stretch (low complexity) spans 126–140 (GAAADEASESAAGDN).

It belongs to the bacterial ribosomal protein bS16 family.

This is Small ribosomal subunit protein bS16 from Cutibacterium acnes (strain DSM 16379 / KPA171202) (Propionibacterium acnes).